A 117-amino-acid polypeptide reads, in one-letter code: Large ribosomal subunit protein bL20 (117 aa).

Belongs to the bacterial ribosomal protein bL20 family.

In terms of biological role, binds directly to 23S ribosomal RNA and is necessary for the in vitro assembly process of the 50S ribosomal subunit. It is not involved in the protein synthesizing functions of that subunit. This chain is Large ribosomal subunit protein bL20, found in Magnetococcus marinus (strain ATCC BAA-1437 / JCM 17883 / MC-1).